The primary structure comprises 458 residues: ATP synthase subunit beta (458 aa).

Residue 147–154 (GGAGVGKT) coordinates ATP.

Belongs to the ATPase alpha/beta chains family. As to quaternary structure, F-type ATPases have 2 components, CF(1) - the catalytic core - and CF(0) - the membrane proton channel. CF(1) has five subunits: alpha(3), beta(3), gamma(1), delta(1), epsilon(1). CF(0) has three main subunits: a(1), b(2) and c(9-12). The alpha and beta chains form an alternating ring which encloses part of the gamma chain. CF(1) is attached to CF(0) by a central stalk formed by the gamma and epsilon chains, while a peripheral stalk is formed by the delta and b chains.

Its subcellular location is the cell inner membrane. It catalyses the reaction ATP + H2O + 4 H(+)(in) = ADP + phosphate + 5 H(+)(out). Produces ATP from ADP in the presence of a proton gradient across the membrane. The catalytic sites are hosted primarily by the beta subunits. This is ATP synthase subunit beta from Chromohalobacter salexigens (strain ATCC BAA-138 / DSM 3043 / CIP 106854 / NCIMB 13768 / 1H11).